The following is a 317-amino-acid chain: MELEFLGTGAGSPSKSRNVSAVALKLLDEIKKIWLFDVGEGTQHQILNTTIRPRKIDKIFITHMHGDHIFGLPGFLSSRSFQGGEKMGPLTIYGPKGISDFVNISLKVSQTKLSYELNFVELEEEGLLLENDRFKVYAYKLDHRIECWGYRIEEKDYPGELQVEKLREAKAPSGPIYGRLKAGEVVTLEDGRTIDGKDFIGKAKKGRIVTILGDTRQTPNLKLLAKDADVLVHESTFGKGEGKLARNYHHSTCVQAATLAKEVGVKQLLLTHISARYVGKMVKVLEKEAKKVFPNTKVVKDFDTFNIPFPERKDDEQ.

Positions 63, 65, 67, 68, 143, 214, and 272 each coordinate Zn(2+). Residue aspartate 67 is the Proton acceptor of the active site.

It belongs to the RNase Z family. In terms of assembly, homodimer. Zn(2+) serves as cofactor.

The catalysed reaction is Endonucleolytic cleavage of RNA, removing extra 3' nucleotides from tRNA precursor, generating 3' termini of tRNAs. A 3'-hydroxy group is left at the tRNA terminus and a 5'-phosphoryl group is left at the trailer molecule.. Its function is as follows. Zinc phosphodiesterase, which displays some tRNA 3'-processing endonuclease activity. Probably involved in tRNA maturation, by removing a 3'-trailer from precursor tRNA. This Ligilactobacillus salivarius (strain UCC118) (Lactobacillus salivarius) protein is Ribonuclease Z.